The sequence spans 159 residues: Ribosomal RNA large subunit methyltransferase H (159 aa).

Residues Leu-76, Gly-108, and 127–132 (FSKMTF) each bind S-adenosyl-L-methionine.

Belongs to the RNA methyltransferase RlmH family. Homodimer.

It localises to the cytoplasm. The catalysed reaction is pseudouridine(1915) in 23S rRNA + S-adenosyl-L-methionine = N(3)-methylpseudouridine(1915) in 23S rRNA + S-adenosyl-L-homocysteine + H(+). Specifically methylates the pseudouridine at position 1915 (m3Psi1915) in 23S rRNA. The protein is Ribosomal RNA large subunit methyltransferase H of Bacillus subtilis (strain 168).